The chain runs to 459 residues: Proton-coupled folate transporter (459 aa).

M1 carries the N-acetylmethionine modification. Residues 1 to 25 (MEGRANSPGEPRAWPTRSVLCRGCV) lie on the Cytoplasmic side of the membrane. Residues 26–44 (EPLVFLANFALVLQGPVTT) form a helical membrane-spanning segment. The Extracellular segment spans residues 45–82 (QYLWHRFSADLGYNGTRHRDSCSNHSVDPIAQEVETLT). Residues N58 and N68 are each glycosylated (N-linked (GlcNAc...) asparagine). C66 and C298 are oxidised to a cystine. The helical transmembrane segment at 83-108 (SHWTLYMNVGGFLVGLFSSTLLGAWS) threads the bilayer. Topologically, residues 109–112 (DCVG) are cytoplasmic. A helical membrane pass occupies residues 113–135 (RRPLLVLASLGLLLQTVLSIFVV). Topologically, residues 136 to 140 (QLHLH) are extracellular. Residues 141–154 (IGYLVLGRILCALL) form a helical membrane-spanning segment. The Cytoplasmic portion of the chain corresponds to 155–177 (GDFSGLLAASFASVADVSSSRTR). Positions 156 and 185 each coordinate H(+). A helical membrane pass occupies residues 178–203 (TIRMALLEACIGVAGMLASFIGGFLL). The Extracellular portion of the chain corresponds to 204–208 (QEQVY). Residues 209–227 (VNPFWLALAVLTVMTLYAA) traverse the membrane as a helical segment. The Cytoplasmic segment spans residues 228–266 (FCFGETVKERTPTRLFTLRHHRSVIQLYVTQAPEKSRKH). The chain crosses the membrane as a helical span at residues 267 to 289 (LALYSLAIFVMITVHLGAQDILT). Residue H281 participates in H(+) binding. At 290–302 (LYELSAPLCWDSR) the chain is on the extracellular side. A helical membrane pass occupies residues 303 to 325 (LISYGSAAQQLPYLTSLLGLRLL). Topologically, residues 326–331 (QYCLAD) are cytoplasmic. Residues 332–351 (TWVAEIGLVFNILGMMVFAF) form a helical membrane-spanning segment. Topologically, residues 352-355 (ATIT) are extracellular. The chain crosses the membrane as a helical span at residues 356–376 (PLMFTGYGLLFLSLVVTPIIR). The Cytoplasmic portion of the chain corresponds to 377 to 388 (AKLSRLVRQSEQ). The helical transmembrane segment at 389–414 (GALFSALACVNGLAMLMASGIFNSLY) threads the bilayer. At 415 to 422 (PATLNLMK) the chain is on the extracellular side. A helical membrane pass occupies residues 423–441 (GFPFLLAAGLLFIPAILMG). At 442 to 459 (ILERDNHCPEFQEFSQSP) the chain is on the cytoplasmic side. S458 carries the post-translational modification Phosphoserine.

This sequence belongs to the major facilitator superfamily. SLC46A family. As to quaternary structure, monomer. In terms of tissue distribution, expressed in retina and retinal pigment epithelium.

Its subcellular location is the cell membrane. It is found in the apical cell membrane. The protein resides in the basolateral cell membrane. The protein localises to the endosome membrane. It localises to the cytoplasm. The catalysed reaction is folate(in) + H(+)(in) = folate(out) + H(+)(out). The enzyme catalyses (6S)-5-methyl-5,6,7,8-tetrahydrofolate(in) + H(+)(in) = (6S)-5-methyl-5,6,7,8-tetrahydrofolate(out) + H(+)(out). It carries out the reaction methotrexate(in) + H(+)(in) = methotrexate(out) + H(+)(out). It catalyses the reaction pemetrexed(in) + H(+)(in) = pemetrexed(out) + H(+)(out). In terms of biological role, proton-coupled folate symporter that mediates folate absorption using an H(+) gradient as a driving force. Involved in the intestinal absorption of folates at the brush-border membrane of the proximal jejunum, and the transport from blood to cerebrospinal fluid across the choroid plexus. Functions at acidic pH via alternate outward- and inward-open conformation states. Protonation of residues in the outward open state primes the protein for transport. Binding of folate promotes breaking of salt bridge network and subsequent closure of the extracellular gate, leading to the inward-open state and release of protons and folate. Also able to transport antifolate drugs, such as methotrexate and pemetrexed. Involved in FOLR1-mediated endocytosis by serving as a route of export of folates from acidified endosomes. Also acts as a lower-affinity, pH-independent heme carrier protein and constitutes the main importer of heme in the intestine. Imports heme in the retina and retinal pigment epithelium, in neurons of the hippocampus, in hepatocytes and in the renal epithelial cells. Hence, participates in the trafficking of heme and increases intracellular iron content. The polypeptide is Proton-coupled folate transporter (Bos taurus (Bovine)).